We begin with the raw amino-acid sequence, 1466 residues long: Adhesion G protein-coupled receptor L1 (1466 aa).

Residues 1 to 28 (MARLAAALWSLCVTTVLVTSATQGLSRA) form the signal peptide. The Extracellular segment spans residues 29-852 (GLPFGLMRRE…EIYQGRINEL (824 aa)). One can recognise an SUEL-type lectin domain in the interval 40–129 (ACEGYPIELR…KYLEVQYDCV (90 aa)). 5 cysteine pairs are disulfide-bonded: cysteine 41–cysteine 71, cysteine 50–cysteine 128, cysteine 83–cysteine 115, cysteine 96–cysteine 102, and cysteine 135–cysteine 317. Glutamate 42 lines the alpha-L-rhamnose pocket. The N-linked (GlcNAc...) asparagine glycan is linked to asparagine 98. 117-120 (GTYK) contributes to the alpha-L-rhamnose binding site. The Olfactomedin-like domain occupies 134-393 (VCPGTLQKVL…VVRYSLEFGP (260 aa)). The segment at 395–463 (DPSAGPATSP…APAPSTRRPP (69 aa)) is disordered. Low complexity predominate over residues 400–436 (PATSPPLSTTTTARPTPLTSTASPAATTPLRRAPLTT). Pro residues predominate over residues 448–463 (DLPPATAPAPSTRRPP). 2 disulfides stabilise this stretch: cysteine 475/cysteine 510 and cysteine 498/cysteine 527. Asparagine 526, asparagine 635, asparagine 736, asparagine 795, asparagine 800, and asparagine 821 each carry an N-linked (GlcNAc...) asparagine glycan. Residues 664-845 (PARFLAAKQN…AVLMAHREIY (182 aa)) enclose the GAIN-B domain. 2 disulfides stabilise this stretch: cysteine 796-cysteine 827 and cysteine 815-cysteine 829. The tract at residues 796–845 (CSFWNYSERSMLGYWSTQGCRLVESNKTHTTCACSHLTNFAVLMAHREIY) is GPS. Residues 853–873 (LLSVITWVGIVISLVCLAICI) form a helical membrane-spanning segment. The Cytoplasmic segment spans residues 874–887 (STFCFLRGLQTDRN). A helical membrane pass occupies residues 888–908 (TIHKNLCINLFLAELLFLVGI). Residues 909 to 914 (DKTQYE) are Extracellular-facing. The chain crosses the membrane as a helical span at residues 915-935 (VACPIFAGLLHYFFLAAFSWL). Over 936–958 (CLEGVHLYLLLVEVFESEYSRTK) the chain is Cytoplasmic. Residues 959-979 (YYYLGGYCFPALVVGIAAAID) traverse the membrane as a helical segment. Residues 980-996 (YRSYGTEKACWLRVDNY) are Extracellular-facing. Residues 997-1017 (FIWSFIGPVSFVIVVNLVFLM) traverse the membrane as a helical segment. Residues 1018–1044 (VTLHKMIRSSSVLKPDSSRLDNIKSWA) lie on the Cytoplasmic side of the membrane. The helical transmembrane segment at 1045 to 1065 (LGAIALLFLLGLTWAFGLLFI) threads the bilayer. Residues 1066–1069 (NKES) lie on the Extracellular side of the membrane. A helical transmembrane segment spans residues 1070–1090 (VVMAYLFTTFNAFQGVFIFVF). At 1091 to 1466 (HCALQKKVHK…DGQMQLVTSL (376 aa)) the chain is on the cytoplasmic side. Arginine 1188 is modified (omega-N-methylarginine). Serine 1214 is subject to Phosphoserine. Disordered regions lie at residues 1242 to 1267 (FNNSYSLRSGDFPPGDGGPEPPRGRN), 1288 to 1319 (RGASGGAKGPPPEPPVPPVPGVSEDEAGGPGS), 1352 to 1421 (ESES…SRPP), and 1443 to 1466 (YLAAPSLEGPGPDGDGQMQLVTSL). The segment covering 1296–1307 (GPPPEPPVPPVP) has biased composition (pro residues). Serine 1319 is subject to Phosphoserine. Over residues 1400-1412 (ALPPPPPAPPGPP) the composition is skewed to pro residues. A phosphoserine mark is found at serine 1448 and serine 1465.

Belongs to the G-protein coupled receptor 2 family. Adhesion G-protein coupled receptor (ADGR) subfamily. Forms a heterodimer, consisting of a large extracellular region (p120) non-covalently linked to a seven-transmembrane moiety (p85). Interacts with syntaxin and with proteins of the SHANK family via the PDZ domain. Interacts (via extracellular domain) with FLRT1, FLRT2 and FLRT3 (via extracellular domain). In terms of processing, autoproteolytically cleaved into 2 subunits, an extracellular subunit and a seven-transmembrane subunit. This proteolytic processing takes place early in the biosynthetic pathway, either in the endoplasmic reticulum or in the early compartment of the Golgi apparatus.

It is found in the cell membrane. The protein localises to the cell projection. The protein resides in the axon. It localises to the growth cone. Its subcellular location is the synapse. It is found in the presynaptic cell membrane. The protein localises to the synaptosome. Functionally, calcium-independent receptor of high affinity for alpha-latrotoxin, an excitatory neurotoxin present in black widow spider venom which triggers massive exocytosis from neurons and neuroendocrine cells. Receptor for TENM2 that mediates heterophilic synaptic cell-cell contact and postsynaptic specialization. Receptor probably implicated in the regulation of exocytosis. The sequence is that of Adhesion G protein-coupled receptor L1 from Mus musculus (Mouse).